The following is a 472-amino-acid chain: UDP-glucuronosyltransferase (472 aa).

N-linked (GlcNAc...) asparagine glycans are attached at residues Asn59, Asn227, and Asn377. The chain crosses the membrane as a helical span at residues 436–456 (FGFILLILLTVLWVTLKCCLF).

It belongs to the UDP-glycosyltransferase family.

The protein resides in the microsome membrane. The protein localises to the endoplasmic reticulum membrane. It carries out the reaction glucuronate acceptor + UDP-alpha-D-glucuronate = acceptor beta-D-glucuronoside + UDP + H(+). Functionally, UDPGT is of major importance in the conjugation and subsequent elimination of potentially toxic xenobiotics and endogenous compounds. The chain is UDP-glucuronosyltransferase (ugt3) from Pleuronectes platessa (European plaice).